We begin with the raw amino-acid sequence, 639 residues long: Mediator of RNA polymerase II transcription subunit 17 (639 aa).

Residues 160–187 adopt a coiled-coil conformation; sequence RLQSFNAAADKLLKSASRLENEVASETR.

It belongs to the Mediator complex subunit 17 family. Component of the Mediator complex.

The protein localises to the nucleus. Component of the Mediator complex, a coactivator involved in the regulated transcription of nearly all RNA polymerase II-dependent genes. Mediator functions as a bridge to convey information from gene-specific regulatory proteins to the basal RNA polymerase II transcription machinery. Mediator is recruited to promoters by direct interactions with regulatory proteins and serves as a scaffold for the assembly of a functional preinitiation complex with RNA polymerase II and the general transcription factors. The sequence is that of Mediator of RNA polymerase II transcription subunit 17 (srb4) from Aspergillus fumigatus (strain ATCC MYA-4609 / CBS 101355 / FGSC A1100 / Af293) (Neosartorya fumigata).